The primary structure comprises 409 residues: Pleckstrin homology domain-containing family O member 1 (409 aa).

Residues 1–24 (MMKKNNSAKRGPQDGNQQPAPPEK) are disordered. One can recognise a PH domain in the interval 21 to 132 (PPEKVGWVRK…WINALNSAIT (112 aa)). Residues 133–193 (RAKNRILDEV…MLTLDLIQEE (61 aa)) are interaction with capping proteins (CPs). Residues 136–308 (NRILDEVTVE…LPNPGQLSRI (173 aa)) form an interaction with ATM, CKIP, IFP35 and NMI region. Residues 218-267 (LAGSRRRADSDRIQPSADRASSLSRPWEKTDKGATYTPQAPKKLTPTEKG) form a disordered region. Phosphoserine occurs at positions 227 and 271. Positions 308-409 (IQDLVARKLE…PHSQYRKSLM (102 aa)) are negative regulator of AP-1 activity. Disordered regions lie at residues 325–350 (EVQG…ESEQ) and 390–409 (TPDS…KSLM). A compositionally biased stretch (basic and acidic residues) spans 331–340 (DGKRKAKDPP). Serine 342 is subject to Phosphoserine. Residues 390 to 402 (TPDSHLRQTTPHS) are compositionally biased toward polar residues.

Heterodimer or homodimer. Interacts with CK2 and actin capping subunits (capping protein CP-alpha and CP-beta). CKIP1 and CK2 together inhibit the activity of actin capping protein at the barbed ends of actin filaments. Interacts with ATM, IFP35, JUN, JUND, NMI and PI3K. Interacts with AKT1, AKT2 and AKT3 (each isozyme of PKB), PtdIns(3,5)P2, PtdIns(4,5)P2 and PtdIns(3,4,5)P2. In terms of processing, C-terminal fragments could be released during apoptosis via caspase-3-dependent cleavage. As to expression, abundantly expressed in skeletal muscle and heart, moderately in kidney, liver, brain and placenta and sparingly in the pancreas and lung. Easily detectable in cell lines such as MOLT-4, HEK293 and Jurkat.

It localises to the cell membrane. It is found in the nucleus. The protein localises to the cytoplasm. Its function is as follows. Plays a role in the regulation of the actin cytoskeleton through its interactions with actin capping protein (CP). May function to target CK2 to the plasma membrane thereby serving as an adapter to facilitate the phosphorylation of CP by protein kinase 2 (CK2). Appears to target ATM to the plasma membrane. Appears to also inhibit tumor cell growth by inhibiting AKT-mediated cell-survival. Also implicated in PI3K-regulated muscle differentiation, the regulation of AP-1 activity (plasma membrane bound AP-1 regulator that translocates to the nucleus) and the promotion of apoptosis induced by tumor necrosis factor TNF. When bound to PKB, it inhibits it probably by decreasing PKB level of phosphorylation. In Homo sapiens (Human), this protein is Pleckstrin homology domain-containing family O member 1 (PLEKHO1).